The following is a 94-amino-acid chain: Large ribosomal subunit protein bL25 (94 aa).

It belongs to the bacterial ribosomal protein bL25 family. As to quaternary structure, part of the 50S ribosomal subunit; part of the 5S rRNA/L5/L18/L25 subcomplex. Contacts the 5S rRNA. Binds to the 5S rRNA independently of L5 and L18.

This is one of the proteins that binds to the 5S RNA in the ribosome where it forms part of the central protuberance. In Escherichia coli O6:K15:H31 (strain 536 / UPEC), this protein is Large ribosomal subunit protein bL25.